The primary structure comprises 182 residues: Nuclear cap-binding protein subunit 2 (182 aa).

MRNA-binding positions include tyrosine 13, tyrosine 35, 104 to 108, 115 to 119, and 125 to 126; these read RADLD, RQYGR, and QV. The RRM domain occupies 32 to 110; the sequence is NCVYVGNLSF…RIIRADLDHG (79 aa). The interval 114–182 is disordered; the sequence is GRQYGRGASG…NPRYNRWKKN (69 aa). Basic and acidic residues predominate over residues 126–136; that stretch reads VRDEMREEFDP. The segment covering 145–175 has biased composition (polar residues); that stretch reads RQPTSSRQLANYSGISSAPLGSSLELQSNPR.

This sequence belongs to the RRM NCBP2 family. Component of the nuclear cap-binding complex (CBC), a heterodimer composed of cbc1 and cbc2 that interacts with capped RNAs.

Its subcellular location is the cytoplasm. The protein localises to the perinuclear region. It localises to the nucleus. Component of the CBC complex, which binds co-transcriptionally to the 5' cap of pre-mRNAs and is involved in maturation, export and degradation of nuclear mRNAs. This Schizosaccharomyces pombe (strain 972 / ATCC 24843) (Fission yeast) protein is Nuclear cap-binding protein subunit 2 (cbc2).